The sequence spans 176 residues: Inorganic pyrophosphatase (176 aa).

Residues Lys30, Arg44, and Tyr56 each coordinate substrate. Asp66, Asp71, and Asp103 together coordinate Mg(2+). Tyr142 serves as a coordination point for substrate.

It belongs to the PPase family. As to quaternary structure, homohexamer. Requires Mg(2+) as cofactor.

Its subcellular location is the cytoplasm. The enzyme catalyses diphosphate + H2O = 2 phosphate + H(+). In terms of biological role, catalyzes the hydrolysis of inorganic pyrophosphate (PPi) forming two phosphate ions. In Vibrio parahaemolyticus serotype O3:K6 (strain RIMD 2210633), this protein is Inorganic pyrophosphatase.